A 406-amino-acid chain; its full sequence is Calsequestrin-1 (406 aa).

Positions 1-34 (MRATDRMGARAVSKLRLALLFVLVLGTPRSGVQG) are cleaved as a signal peptide. Tyr-43 carries the post-translational modification Phosphotyrosine. The residue at position 81 (Ser-81) is a Phosphoserine. Residue Thr-124 is modified to Phosphothreonine. Ser-216 carries the phosphoserine modification. N-linked (GlcNAc...) asparagine glycosylation is present at Asn-350. Residues 382 to 406 (EGEINTEDDDDDDDDDDDDDDDDDD) form a disordered region.

The protein belongs to the calsequestrin family. As to quaternary structure, monomer; increases in response to a depletion of intracellular calcium. Homodimer. Homotetramer and homopolymer. Can form linear homooligomers. Ca(2+) ions promote oligomerization. Interacts (via C-terminal end and preferentially with the monomeric form) with STIM1; this interaction increases in response to a depletion of intracellular calcium, decreases both STIM1 aggregation and clustering, interaction of STIM1 with ORAI1 and store-operated Ca(2+) entry (SOCE) activity. Interacts with ASPH and TRDN. In terms of processing, N-glycosylated. In terms of tissue distribution, detected in skeletal muscle and in smooth muscle from vas deferens, aorta and stomach (at protein level).

The protein resides in the endoplasmic reticulum. It is found in the sarcoplasmic reticulum. Its subcellular location is the sarcoplasmic reticulum lumen. It localises to the sarcoplasmic reticulum membrane. The protein localises to the mitochondrion matrix. Functionally, calsequestrin is a high-capacity, moderate affinity, calcium-binding protein and thus acts as an internal calcium store in muscle. Calcium ions are bound by clusters of acidic residues at the protein surface, often at the interface between subunits. Can bind around 80 Ca(2+) ions. Regulates the release of lumenal Ca(2+) via the calcium release channel RYR1; this plays an important role in triggering muscle contraction. Negatively regulates store-operated Ca(2+) entry (SOCE) activity. The sequence is that of Calsequestrin-1 (Casq1) from Rattus norvegicus (Rat).